The sequence spans 377 residues: D-alanine--D-alanine ligase (377 aa).

Positions 140 to 349 (KELLTVNNIR…NVELVDKLID (210 aa)) constitute an ATP-grasp domain. 170-225 (VKDLGDVVFVKAANQGSSVGVSRAKTADEFEAALTDSFQYDYKVLIEAAVKGPREL) provides a ligand contact to ATP. 3 residues coordinate Mg(2+): D303, E316, and N318.

The protein belongs to the D-alanine--D-alanine ligase family. The cofactor is Mg(2+). Requires Mn(2+) as cofactor.

It localises to the cytoplasm. The catalysed reaction is 2 D-alanine + ATP = D-alanyl-D-alanine + ADP + phosphate + H(+). It functions in the pathway cell wall biogenesis; peptidoglycan biosynthesis. Functionally, cell wall formation. This chain is D-alanine--D-alanine ligase, found in Leuconostoc citreum (strain KM20).